A 236-amino-acid chain; its full sequence is Orotidine 5'-phosphate decarboxylase (236 aa).

Residues Asp17, Lys39, 66 to 75, Thr125, Arg186, Gln195, Gly215, and Arg216 contribute to the substrate site; that span reads DLKFHDIPNT. The active-site Proton donor is Lys68.

It belongs to the OMP decarboxylase family. Type 1 subfamily. As to quaternary structure, homodimer.

It catalyses the reaction orotidine 5'-phosphate + H(+) = UMP + CO2. It participates in pyrimidine metabolism; UMP biosynthesis via de novo pathway; UMP from orotate: step 2/2. Catalyzes the decarboxylation of orotidine 5'-monophosphate (OMP) to uridine 5'-monophosphate (UMP). This chain is Orotidine 5'-phosphate decarboxylase, found in Buchnera aphidicola subsp. Schizaphis graminum (strain Sg).